Consider the following 237-residue polypeptide: Demethylmenaquinone methyltransferase (237 aa).

S-adenosyl-L-methionine is bound by residues Thr-58, Asp-79, and 106-107 (NA).

It belongs to the class I-like SAM-binding methyltransferase superfamily. MenG/UbiE family.

It catalyses the reaction a 2-demethylmenaquinol + S-adenosyl-L-methionine = a menaquinol + S-adenosyl-L-homocysteine + H(+). It participates in quinol/quinone metabolism; menaquinone biosynthesis; menaquinol from 1,4-dihydroxy-2-naphthoate: step 2/2. Its function is as follows. Methyltransferase required for the conversion of demethylmenaquinol (DMKH2) to menaquinol (MKH2). This Anoxybacillus flavithermus (strain DSM 21510 / WK1) protein is Demethylmenaquinone methyltransferase.